The following is a 396-amino-acid chain: Methionine import ATP-binding protein MetN 2 (396 aa).

One can recognise an ABC transporter domain in the interval 41-280 (VSFELVGKVF…PRHGATRALL (240 aa)). 77-84 (GRSGAGKS) is a binding site for ATP.

The protein belongs to the ABC transporter superfamily. Methionine importer (TC 3.A.1.24) family. As to quaternary structure, the complex is composed of two ATP-binding proteins (MetN), two transmembrane proteins (MetI) and a solute-binding protein (MetQ).

It is found in the cell inner membrane. It catalyses the reaction L-methionine(out) + ATP + H2O = L-methionine(in) + ADP + phosphate + H(+). The catalysed reaction is D-methionine(out) + ATP + H2O = D-methionine(in) + ADP + phosphate + H(+). Its function is as follows. Part of the ABC transporter complex MetNIQ involved in methionine import. Responsible for energy coupling to the transport system. This is Methionine import ATP-binding protein MetN 2 from Burkholderia mallei (strain ATCC 23344).